The primary structure comprises 848 residues: Translation initiation factor IF-2 (848 aa).

The span at 1 to 10 (MSENNNDKIT) shows a compositional bias: basic and acidic residues. Disordered stretches follow at residues 1-79 (MSEN…EKPV) and 121-163 (AERQ…LFSS). The segment covering 17-33 (LKRSGSETNTVKQNFNH) has biased composition (polar residues). Basic and acidic residues predominate over residues 121 to 138 (AERQAAEKQAKESEEGLH). Over residues 149–163 (KSSSNTTKPTPLFSS) the composition is skewed to polar residues. A tr-type G domain is found at 346-513 (TRPPIVTIMG…AILLQAEILD (168 aa)). The segment at 355 to 362 (GHVDHGKT) is G1. 355-362 (GHVDHGKT) provides a ligand contact to GTP. Positions 380-384 (GITQH) are G2. The interval 401–404 (DTPG) is G3. GTP-binding positions include 401–405 (DTPGH) and 455–458 (NKID). A G4 region spans residues 455–458 (NKID). The tract at residues 491 to 493 (SAK) is G5.

This sequence belongs to the TRAFAC class translation factor GTPase superfamily. Classic translation factor GTPase family. IF-2 subfamily.

It localises to the cytoplasm. Its function is as follows. One of the essential components for the initiation of protein synthesis. Protects formylmethionyl-tRNA from spontaneous hydrolysis and promotes its binding to the 30S ribosomal subunits. Also involved in the hydrolysis of GTP during the formation of the 70S ribosomal complex. This Bartonella bacilliformis (strain ATCC 35685 / KC583 / Herrer 020/F12,63) protein is Translation initiation factor IF-2.